Reading from the N-terminus, the 776-residue chain is MHNINNGYVPNREKTITKRKVRLVGGKAGNLVLENPVPTELRKVLTRTESPFGEFTNMTYTACTSQPDTFSAEGFTLRAAKYGRETEIVICITMYNEDEVAFARTMHGVMKNIAHLCSRHKSKIWGKDSWKKVQVIIVADGRNKVQQSVLELLTATGCYQENLARPYVNNSKVNAHLFEYTTQISIDENLKFKGDEKNLAPVQVLFCLKESNQKKINSHRWLFNAFCPVLDPNVIVLLDVGTKPDNHAIYNLWKAFDRDSNVAGAAGEIKAMKGKGWINLTNPLVASQNFEYKLSNILDKPLESLFGYISVLPGALSAYRYIALKNHDDGTGPLASYFKGEDLLCSHDKDKENTKANFFEANMYLAEDRILCWELVSKRNDNWVLKFVKSATGETDVPETIAEFLSQRRRWINGAFFAALYSLYHFRKIWTTDHSYARKFWLHVEEFIYQLVSLLFSFFSLSNFYLTFYFLTGSLVSYKSLGKKGGFWIFTLFNYLCIGVLTSLFIVSIGNRPHASKNIFKTLIILLTICALYALVVGFVFVINTIATFGTGGTSTYVLVSIVVSLLSTYGLYTLMSILYLDPWHMLTCSVQYFLMIPSYTCTLQIFAFCNTHDVSWGTKGDNNPKEDLSNQYIIEKNASGEFEAVIVDTNIDEDYLETLYNIRSKRSNKKVALGHSEKTPLDGDDYAKDVRTRVVLFWMIANLVFIMTMVQVYEPGDTGRNIYLAFILWAVAVLALVRAIGSLGYLIQTYARFFVESKSKWMKRGYTAPSHNPLN.

6 helical membrane-spanning segments follow: residues 451-471 (LVSL…FYFL), 487-507 (FWIF…LFIV), 523-543 (LIIL…VFVI), 558-578 (VLVS…LMSI), 695-714 (VVLF…VQVY), and 723-743 (IYLA…AIGS).

Belongs to the chitin synthase family.

It localises to the cell membrane. The enzyme catalyses [(1-&gt;4)-N-acetyl-beta-D-glucosaminyl](n) + UDP-N-acetyl-alpha-D-glucosamine = [(1-&gt;4)-N-acetyl-beta-D-glucosaminyl](n+1) + UDP + H(+). With respect to regulation, requires proteolytic activation. Functionally, polymerizes chitin, a structural polymer of the cell wall and septum, by transferring the sugar moiety of UDP-GlcNAc to the non-reducing end of the growing chitin polymer. Also involved in forming cross walls in the hyphal phase. The sequence is that of Chitin synthase 1 (CHS1) from Candida albicans (Yeast).